The primary structure comprises 294 residues: 4-hydroxy-tetrahydrodipicolinate synthase (294 aa).

Threonine 44 contacts pyruvate. The active-site Proton donor/acceptor is tyrosine 132. The active-site Schiff-base intermediate with substrate is lysine 161. Isoleucine 206 contributes to the pyruvate binding site.

It belongs to the DapA family. In terms of assembly, homotetramer; dimer of dimers.

It localises to the cytoplasm. The catalysed reaction is L-aspartate 4-semialdehyde + pyruvate = (2S,4S)-4-hydroxy-2,3,4,5-tetrahydrodipicolinate + H2O + H(+). Its pathway is amino-acid biosynthesis; L-lysine biosynthesis via DAP pathway; (S)-tetrahydrodipicolinate from L-aspartate: step 3/4. Its activity is regulated as follows. Is not inhibited by (S)-lysine, in contrast to E.coli DapA. In terms of biological role, catalyzes the condensation of (S)-aspartate-beta-semialdehyde [(S)-ASA] and pyruvate to 4-hydroxy-tetrahydrodipicolinate (HTPA). In Thermotoga maritima (strain ATCC 43589 / DSM 3109 / JCM 10099 / NBRC 100826 / MSB8), this protein is 4-hydroxy-tetrahydrodipicolinate synthase.